The chain runs to 357 residues: Peptide chain release factor 1 (357 aa).

Glutamine 234 is subject to N5-methylglutamine. The disordered stretch occupies residues 283–313 (SKKQEQRSSNRKQQVGSGDRSERIRTYNFPQ).

Belongs to the prokaryotic/mitochondrial release factor family. Post-translationally, methylated by PrmC. Methylation increases the termination efficiency of RF1.

Its subcellular location is the cytoplasm. In terms of biological role, peptide chain release factor 1 directs the termination of translation in response to the peptide chain termination codons UAG and UAA. The protein is Peptide chain release factor 1 of Borrelia garinii subsp. bavariensis (strain ATCC BAA-2496 / DSM 23469 / PBi) (Borreliella bavariensis).